A 383-amino-acid chain; its full sequence is MAKHLGKKIAPIPMSTDISVVDLIDNYFTAYNSARLREASQLLACDILKDGVTVGVSLSGAMTPAGFGVSALAPLIRNGFIDWMISTGANLYHDMHYGLGFELFAGNPFLDDVKLREEGTIRIYDIIFGYDVLLETDAFIRKILQAEPFQKRMGTAEFHYLLGKYVREVEKQLGVKHSCLLATAYEYGVPIYTSSPGDSSIGMNVAALALEGSQLILDPAIDVNETAAIAYNAREGEGKSAAVILGGGSPKNFLLQTQPQIHEVLGLEERGHDFFVQFTDARPDTGGLSGATPAEAVSWGKIDPDELPSTIVCYTDSTIALPLVTAYVLNQCPPRPLKRLYDRREELYDKLRTDYLAAKDKPVEKVATNGEVATYPCGTPIRQ.

Belongs to the deoxyhypusine synthase family.

In Nostoc sp. (strain PCC 7120 / SAG 25.82 / UTEX 2576), this protein is Deoxyhypusine synthase-like protein.